The chain runs to 247 residues: 3,4-dihydroxy-2-butanone 4-phosphate synthase (247 aa).

Residues 38–39, D43, 179–183, and E203 contribute to the D-ribulose 5-phosphate site; these read RE and RMGQT. E39 contacts Mg(2+).

Belongs to the DHBP synthase family. Homodimer. The cofactor is Mg(2+). Mn(2+) is required as a cofactor.

The enzyme catalyses D-ribulose 5-phosphate = (2S)-2-hydroxy-3-oxobutyl phosphate + formate + H(+). The protein operates within cofactor biosynthesis; riboflavin biosynthesis; 2-hydroxy-3-oxobutyl phosphate from D-ribulose 5-phosphate: step 1/1. Its function is as follows. Catalyzes the conversion of D-ribulose 5-phosphate to formate and 3,4-dihydroxy-2-butanone 4-phosphate. In Methanosarcina mazei (strain ATCC BAA-159 / DSM 3647 / Goe1 / Go1 / JCM 11833 / OCM 88) (Methanosarcina frisia), this protein is 3,4-dihydroxy-2-butanone 4-phosphate synthase.